The primary structure comprises 223 residues: Prolactin-3D4 (223 aa).

The signal sequence occupies residues 1–28 (MQLTLTLSGSSMQLLLLVSNLLLWENMA). Disulfide bonds link Cys80-Cys198 and Cys215-Cys223. Asn108 and Asn157 each carry an N-linked (GlcNAc...) asparagine glycan.

Belongs to the somatotropin/prolactin family. In terms of processing, N-glycosylated.

It localises to the secreted. This chain is Prolactin-3D4 (Prl3d4), found in Rattus norvegicus (Rat).